Reading from the N-terminus, the 30-residue chain is GLPVCGETCFGGTCNTPGCSCDPWPMCSRN.

Residues 1–30 (GLPVCGETCFGGTCNTPGCSCDPWPMCSRN) constitute a cross-link (cyclopeptide (Gly-Asn)). Disulfide bonds link cysteine 5–cysteine 19, cysteine 9–cysteine 21, and cysteine 14–cysteine 27.

Post-translationally, this is a cyclic peptide.

Functionally, probably participates in a plant defense mechanism. This chain is Varv peptide B, found in Viola arvensis (European field pansy).